Here is a 297-residue protein sequence, read N- to C-terminus: Trans-enoyl reductase TOXD (297 aa).

NADP(+) contacts are provided by residues 162-165 and tyrosine 203; that span reads STAT.

This sequence belongs to the zinc-containing alcohol dehydrogenase family. In terms of assembly, monomer.

In terms of biological role, trans-enoyl reductase; part of the diffuse TOX2 gene cluster that mediates the biosynthesis of the HC-toxin, cyclic tetrapeptide of structure cyclo(D-Pro-L-Ala-D-Ala-L-Aeo), where Aeo stands for 2-amino-9,10-epoxi-8-oxodecanoic acid. HC-toxin is a determinant of specificity and virulence in the interaction between the producing fungus and its host, maize. TOXD does not seem to play a role in HC-toxin biosynthesis. This chain is Trans-enoyl reductase TOXD, found in Cochliobolus carbonum (Maize leaf spot fungus).